Here is a 781-residue protein sequence, read N- to C-terminus: Catenin beta-1 (781 aa).

A2 carries the post-translational modification N-acetylalanine. Residues 2-23 (ATQADLMELDMAMEPDRKAAVS) are interaction with VCL. S23 is modified (phosphoserine; by GSK3-beta; alternate). The O-linked (GlcNAc) serine; alternate glycan is linked to S23. S29 is modified (phosphoserine; by GSK3-beta). 2 positions are modified to phosphoserine; by GSK3-beta and HIPK2: S33 and S37. Residues 34-57 (GIHSGATTTAPSLSGKGNPEEEDV) form a disordered region. T41 is subject to Phosphothreonine; by GSK3-beta. At S45 the chain carries Phosphoserine. Position 49 is an N6-acetyllysine (K49). Y64 carries the post-translational modification Phosphotyrosine; by PTK6. Y142 is modified (phosphotyrosine; by FYN and PTK6). ARM repeat units follow at residues 151 to 191 (RAIP…IMRS), 193 to 234 (QMVS…IFKS), 235 to 276 (GGIP…VRLA), 277 to 318 (GGLQ…ILAS), 319 to 360 (GGPQ…IVEA), 361 to 389 (GGMQALGLHLTDPSQRLVQNCLWTLRNLS), 400 to 441 (GLLG…VCQV), 442 to 484 (GGIE…AQNA), 489 to 530 (YGLP…LREQ), 531 to 571 (GAIP…EIVE), 594 to 636 (NTIP…AEGA), and 637 to 666 (TAPLTELLHSRNEGVATYAAAVLFRMSEDK). Residues 156 to 178 (LTKLLNDEDQVVVNKAAVMVHQL) form an interaction with BCL9 region. S191 is subject to Phosphoserine. Phosphoserine; by CDK5 is present on S246. A phosphotyrosine mark is found at Y331 and Y333. Phosphoserine; by AMPK is present on S552. At T556 the chain carries Phosphothreonine. C619 is subject to S-nitrosocysteine. A Phosphoserine modification is found at S675. A disordered region spans residues 720 to 781 (HSGGYGQDAL…NQLAWFDTDL (62 aa)). Residues 734–745 (MMEHEMGGHHPG) are compositionally biased toward basic and acidic residues. Residues 772 to 781 (NQLAWFDTDL) are interaction with SCRIB.

It belongs to the beta-catenin family. In terms of assembly, two separate complex-associated pools are found in the cytoplasm. The majority is present as component of an E-cadherin/ catenin adhesion complex composed of at least E-cadherin/CDH1 and beta-catenin/CTNNB1, and possibly alpha-catenin/CTNNA1; the complex is located to adherens junctions. The stable association of CTNNA1 is controversial as CTNNA1 was shown not to bind to F-actin when assembled in the complex. Alternatively, the CTNNA1-containing complex may be linked to F-actin by other proteins such as LIMA1. Binds NHERF1. Interacts with PTPRU (via the cytoplasmic juxtamembrane domain) and with EMD. Interacts with SESTD1 and TRPC4. Interacts with CAV1. Interacts with PTPRJ. Interacts with PKT7. Interacts with FAT1 (via the cytoplasmic domain). Interacts with CDK2, NDRG2 and NANOS1. Interacts with NEK2 and CDK5. Interacts with CARM1, CXADR, PCDH11Y and PTK6. Interacts with RAPGEF2. Interacts with SOX7; this interaction may lead to proteasomal degradation of active CTNNB1 and thus inhibition of Wnt/beta-catenin-stimulated transcription. Identified in a complex with HINT1 and MITF. Interacts with FHIT. Interacts with FERMT2. Identified in a complex with TCF4 and FERMT2. Another cytoplasmic pool is part of a large complex containing AXIN1, AXIN2, APC, CSNK1A1 and GSK3B that promotes phosphorylation on N-terminal Ser and Thr residues and ubiquitination of CTNNB1 via BTRC and its subsequent degradation by the proteasome. Wnt-dependent activation of DVL antagonizes the action of GSK3B. When GSK3B activity is inhibited the complex dissociates, CTNNB1 is dephosphorylated and is no longer targeted for destruction. The stabilized protein translocates to the nucleus, where it binds TCF/LEF-1 family members, BCL9, BCL9L and possibly also RUVBL1 and CHD8. Interacts with TAX1BP3 (via the PDZ domain); this interaction inhibits the transcriptional activity of CTNNB1. Interacts with AJAP1, BAIAP1 and CTNNA3. Interacts with TRPV4; the TRPV4 and CTNNB1 complex can interact with CDH1. Interacts with VCL. The CTNNB1 and TCF4 complex interacts with PML. Interacts with XIRP1. Binds CTNNBIP and EP300. CTNNB1 forms a ternary complex with LEF1 and EP300 that is disrupted by CTNNBIP1 binding. Interacts directly with AXIN1; the interaction is regulated by CDK2 phosphorylation of AXIN1. Interacts with GLIS2. Interacts with SCRIB. Interacts with TNIK and TCF7L2. Interacts with SLC30A9. Interacts with RORA. May interact with P-cadherin/CDH3. Interacts with RNF220. Interacts with CTNND2. Interacts (via the C-terminal region) with CBY1. The complex composed, at least, of APC, CTNNB1 and GSK3B interacts with JPT1; the interaction requires the inactive form of GSK3B (phosphorylated at 'Ser-9'). Interacts with DLG5. Interacts with FAM53B; promoting translocation to the nucleus. Interacts with TMEM170B. Interacts with AHI1. Interacts with GID8. Component of an cadherin:catenin adhesion complex composed of at least of CDH26, beta-catenin/CTNNB1, alpha-catenin/CTNNA1 and p120 catenin/CTNND1. Forms a complex comprising APPL1, RUVBL2, APPL2, HDAC1 and HDAC2. Interacts with IRF2BPL; mediates the ubiquitination and degradation of CTNNB1. Interacts with AMFR. Interacts with LMBR1L. Interacts with SOX30; prevents interaction of CTNNB1 with TCF7L2/TCF4 and leads to inhibition of Wnt signaling. Interacts with SOX9; inhibiting CTNNB1 activity by competing with the binding sites of TCF/LEF within CTNNB1, thereby inhibiting the Wnt signaling. Interacts with SPN/CD43 cytoplasmic tail. Interacts (when phosphorylated at Tyr-333) with isoform M2 of PKM (PKM2); promoting transcription activation. Interacts with PKP2 (via HEAD domain). Interacts with CDH1. Interacts (when unphosphorylated) with FLYWCH1, perhaps preventing interaction of CTNNB1 with TCF4, and thereby regulating transcription activation; phosphorylation of CTNNB1 may inhibit the interaction. Interacts (via the central armadillo domains) with probable transcriptional regulator ADNP (via N-terminal region); interaction is direct and stabilizes CTNNB1 by modulating its phosphorylation by glycogen synthase kinase-3 beta GSK3B. Interacts with NR5A2. Interacts with DSG2; the interaction promotes localization of CTNNB1 at cell junctions thus reducing its nuclear localization and subsequent transcription of CTNNB1/TCF-target genes. Post-translationally, phosphorylation at Ser-552 by AMPK promotes stabilization of the protein, enhancing TCF/LEF-mediated transcription. Phosphorylation by GSK3B requires prior phosphorylation of Ser-45 by another kinase. Phosphorylation proceeds then from Thr-41 to Ser-37 and Ser-33. Phosphorylated by NEK2. EGF stimulates tyrosine phosphorylation. Phosphorylated on Ser-33 and Ser-37 by HIPK2 and GSK3B, this phosphorylation triggers proteasomal degradation. Phosphorylation on Ser-191 and Ser-246 by CDK5. Phosphorylation by CDK2 regulates insulin internalization. Phosphorylation by PTK6 at Tyr-64, Tyr-142, Tyr-331 and/or Tyr-333 with the predominant site at Tyr-64 is not essential for inhibition of transcriptional activity. Phosphorylation by SRC at Tyr-333 promotes interaction with isoform M2 of PKM (PKM2); promoting transcription activation. Ubiquitinated by the SCF(BTRC) E3 ligase complex when phosphorylated by GSK3B, leading to its degradation. Ubiquitinated by a E3 ubiquitin ligase complex containing UBE2D1, SIAH1, CACYBP/SIP, SKP1, APC and TBL1X, leading to its subsequent proteasomal degradation. Ubiquitinated and degraded following interaction with SOX9. Ubiquitinated via 'Lys-11'- and 'Lys-29'-linked ubiquitin chains by UBR5, leading to its stabilization. In terms of processing, S-nitrosylation at Cys-619 within adherens junctions promotes VEGF-induced, NO-dependent endothelial cell permeability by disrupting interaction with E-cadherin, thus mediating disassembly adherens junctions. Post-translationally, O-glycosylation at Ser-23 decreases nuclear localization and transcriptional activity, and increases localization to the plasma membrane and interaction with E-cadherin CDH1. Deacetylated at Lys-49 by SIRT1. In terms of tissue distribution, expressed in cerebellar granule neurons (at protein level). Expressed in the intestinal epithelium (at protein level). Abundantly expressed in the tooth, skin, lung, kidney, eye and brain with weak expression in the liver and heart.

Its subcellular location is the cytoplasm. The protein resides in the nucleus. It is found in the cytoskeleton. The protein localises to the cell junction. It localises to the adherens junction. Its subcellular location is the cell membrane. The protein resides in the microtubule organizing center. It is found in the centrosome. The protein localises to the spindle pole. It localises to the synapse. Its subcellular location is the cilium basal body. In terms of biological role, key downstream component of the canonical Wnt signaling pathway. In the absence of Wnt, forms a complex with AXIN1, AXIN2, APC, CSNK1A1 and GSK3B that promotes phosphorylation on N-terminal Ser and Thr residues and ubiquitination of CTNNB1 via BTRC and its subsequent degradation by the proteasome. In the presence of Wnt ligand, CTNNB1 is not ubiquitinated and accumulates in the nucleus, where it acts as a coactivator for transcription factors of the TCF/LEF family, leading to activate Wnt responsive genes. Also acts as a coactivator for other transcription factors, such as NR5A2. Promotes epithelial to mesenchymal transition/mesenchymal to epithelial transition (EMT/MET) via driving transcription of CTNNB1/TCF-target genes. Involved in the regulation of cell adhesion, as component of an E-cadherin:catenin adhesion complex. Acts as a negative regulator of centrosome cohesion. Involved in the CDK2/PTPN6/CTNNB1/CEACAM1 pathway of insulin internalization. Blocks anoikis of malignant kidney and intestinal epithelial cells and promotes their anchorage-independent growth by down-regulating DAPK2. Disrupts PML function and PML-NB formation by inhibiting RANBP2-mediated sumoylation of PML. Promotes neurogenesis by maintaining sympathetic neuroblasts within the cell cycle. Involved in chondrocyte differentiation via interaction with SOX9: SOX9-binding competes with the binding sites of TCF/LEF within CTNNB1, thereby inhibiting the Wnt signaling. Acts as a positive regulator of odontoblast differentiation during mesenchymal tooth germ formation, via promoting the transcription of differentiation factors such as LEF1, BMP2 and BMP4. Activity is repressed in a MSX1-mediated manner at the bell stage of mesenchymal tooth germ formation which prevents premature differentiation of odontoblasts. The protein is Catenin beta-1 of Mus musculus (Mouse).